The sequence spans 427 residues: Tol-Pal system protein TolB (427 aa).

Positions 1 to 23 are cleaved as a signal peptide; that stretch reads MKLLKRLVSVFAIVLAVGSNAFA.

It belongs to the TolB family. As to quaternary structure, the Tol-Pal system is composed of five core proteins: the inner membrane proteins TolA, TolQ and TolR, the periplasmic protein TolB and the outer membrane protein Pal. They form a network linking the inner and outer membranes and the peptidoglycan layer.

Its subcellular location is the periplasm. Part of the Tol-Pal system, which plays a role in outer membrane invagination during cell division and is important for maintaining outer membrane integrity. The polypeptide is Tol-Pal system protein TolB (Haemophilus influenzae (strain PittEE)).